Here is a 183-residue protein sequence, read N- to C-terminus: Hypoxanthine/guanine phosphoribosyltransferase (183 aa).

The protein belongs to the purine/pyrimidine phosphoribosyltransferase family. Archaeal HPRT subfamily. In terms of assembly, homodimer.

It is found in the cytoplasm. It carries out the reaction IMP + diphosphate = hypoxanthine + 5-phospho-alpha-D-ribose 1-diphosphate. The enzyme catalyses GMP + diphosphate = guanine + 5-phospho-alpha-D-ribose 1-diphosphate. It functions in the pathway purine metabolism; IMP biosynthesis via salvage pathway; IMP from hypoxanthine: step 1/1. In terms of biological role, catalyzes a salvage reaction resulting in the formation of IMP that is energically less costly than de novo synthesis. This Methanocaldococcus vulcanius (strain ATCC 700851 / DSM 12094 / M7) (Methanococcus vulcanius) protein is Hypoxanthine/guanine phosphoribosyltransferase.